Reading from the N-terminus, the 537-residue chain is CTP synthase (537 aa).

Residues 1 to 268 are amidoligase domain; the sequence is MPFKCIFLTG…STFITEKLGL (268 aa). S14 lines the CTP pocket. S14 serves as a coordination point for UTP. 15–20 contacts ATP; the sequence is SLGKGL. Y55 contributes to the L-glutamine binding site. Residue D72 coordinates ATP. 2 residues coordinate Mg(2+): D72 and E142. CTP-binding positions include 149-151, 188-193, and K224; these read DIE and KTKPTQ. UTP is bound by residues 188–193 and K224; that span reads KTKPTQ. Positions 294–533 constitute a Glutamine amidotransferase type-1 domain; it reads RIGLVGKYVQ…IQAALLYSKN (240 aa). G353 is a binding site for L-glutamine. C380 functions as the Nucleophile; for glutamine hydrolysis in the catalytic mechanism. L-glutamine-binding positions include 381-384, E404, and R461; that span reads LGMQ. Residues H506 and E508 contribute to the active site.

It belongs to the CTP synthase family. Homotetramer.

The catalysed reaction is UTP + L-glutamine + ATP + H2O = CTP + L-glutamate + ADP + phosphate + 2 H(+). It catalyses the reaction L-glutamine + H2O = L-glutamate + NH4(+). It carries out the reaction UTP + NH4(+) + ATP = CTP + ADP + phosphate + 2 H(+). Its pathway is pyrimidine metabolism; CTP biosynthesis via de novo pathway; CTP from UDP: step 2/2. Its activity is regulated as follows. Allosterically activated by GTP, when glutamine is the substrate; GTP has no effect on the reaction when ammonia is the substrate. The allosteric effector GTP functions by stabilizing the protein conformation that binds the tetrahedral intermediate(s) formed during glutamine hydrolysis. Inhibited by the product CTP, via allosteric rather than competitive inhibition. Functionally, catalyzes the ATP-dependent amination of UTP to CTP with either L-glutamine or ammonia as the source of nitrogen. Regulates intracellular CTP levels through interactions with the four ribonucleotide triphosphates. The protein is CTP synthase of Chlamydia caviae (strain ATCC VR-813 / DSM 19441 / 03DC25 / GPIC) (Chlamydophila caviae).